A 293-amino-acid chain; its full sequence is uncharacterized protein (293 aa).

Disordered stretches follow at residues 1-23 (MGWP…AQTD) and 52-83 (ELQS…SELS). Residues 8–17 (KPEDSKEEHG) are compositionally biased toward basic and acidic residues. Residues 52–71 (ELQSYSHTSESPVETKTPTT) are compositionally biased toward polar residues.

This is an uncharacterized protein from Mus musculus (Mouse).